The following is a 703-amino-acid chain: Elongation factor G (703 aa).

Residues 9–292 (ERTRNIGIMA…AVVDYLPGPL (284 aa)) enclose the tr-type G domain. GTP is bound by residues 18 to 25 (AHIDAGKT), 91 to 95 (DTPGH), and 145 to 148 (NKMD).

The protein belongs to the TRAFAC class translation factor GTPase superfamily. Classic translation factor GTPase family. EF-G/EF-2 subfamily.

It is found in the cytoplasm. Catalyzes the GTP-dependent ribosomal translocation step during translation elongation. During this step, the ribosome changes from the pre-translocational (PRE) to the post-translocational (POST) state as the newly formed A-site-bound peptidyl-tRNA and P-site-bound deacylated tRNA move to the P and E sites, respectively. Catalyzes the coordinated movement of the two tRNA molecules, the mRNA and conformational changes in the ribosome. In Leuconostoc citreum (strain KM20), this protein is Elongation factor G.